We begin with the raw amino-acid sequence, 323 residues long: Mediator of RNA polymerase II transcription subunit 6 (323 aa).

Disordered regions lie at residues 172-213 (FTPS…DAAG) and 271-323 (TDRT…KVGS). Residues 189–203 (DASQPGTQSQQSKEN) show a composition bias toward polar residues. The span at 276-285 (AAKPPATAAK) shows a compositional bias: low complexity. Basic residues predominate over residues 314 to 323 (MRKKKTKVGS).

It belongs to the Mediator complex subunit 6 family. Component of the Mediator complex.

Its subcellular location is the nucleus. In terms of biological role, component of the Mediator complex, a coactivator involved in the regulated transcription of nearly all RNA polymerase II-dependent genes. Mediator functions as a bridge to convey information from gene-specific regulatory proteins to the basal RNA polymerase II transcription machinery. Mediator is recruited to promoters by direct interactions with regulatory proteins and serves as a scaffold for the assembly of a functional preinitiation complex with RNA polymerase II and the general transcription factors. This chain is Mediator of RNA polymerase II transcription subunit 6 (med6), found in Aspergillus niger (strain ATCC MYA-4892 / CBS 513.88 / FGSC A1513).